The following is a 333-amino-acid chain: Ribosomal RNA small subunit methyltransferase H (333 aa).

Residues 31–33 (GGY), Asp49, Phe76, Asp134, and Gln141 each bind S-adenosyl-L-methionine.

Belongs to the methyltransferase superfamily. RsmH family.

It is found in the cytoplasm. It catalyses the reaction cytidine(1402) in 16S rRNA + S-adenosyl-L-methionine = N(4)-methylcytidine(1402) in 16S rRNA + S-adenosyl-L-homocysteine + H(+). In terms of biological role, specifically methylates the N4 position of cytidine in position 1402 (C1402) of 16S rRNA. The polypeptide is Ribosomal RNA small subunit methyltransferase H (Wolbachia sp. subsp. Brugia malayi (strain TRS)).